The following is a 168-amino-acid chain: Protein-export protein SecB (168 aa).

The protein belongs to the SecB family. As to quaternary structure, homotetramer, a dimer of dimers. One homotetramer interacts with 1 SecA dimer.

The protein resides in the cytoplasm. Functionally, one of the proteins required for the normal export of preproteins out of the cell cytoplasm. It is a molecular chaperone that binds to a subset of precursor proteins, maintaining them in a translocation-competent state. It also specifically binds to its receptor SecA. The chain is Protein-export protein SecB from Haemophilus influenzae (strain PittGG).